We begin with the raw amino-acid sequence, 231 residues long: GrpE protein homolog, mitochondrial (231 aa).

The segment at 49 to 71 (SEKAGEKAEEKAEEQNLSAEEQK) is disordered.

It belongs to the GrpE family. As to quaternary structure, component of the PAM complex, at least composed of mtHsp70, MGE1, TIM44, PAM16, PAM17 and PAM18.

It localises to the mitochondrion matrix. Its function is as follows. Essential component of the PAM complex, a complex required for the translocation of transit peptide-containing proteins from the inner membrane into the mitochondrial matrix in an ATP-dependent manner. Seems to control the nucleotide-dependent binding of SSC1 to substrate proteins. This Candida glabrata (strain ATCC 2001 / BCRC 20586 / JCM 3761 / NBRC 0622 / NRRL Y-65 / CBS 138) (Yeast) protein is GrpE protein homolog, mitochondrial (mge1).